The chain runs to 496 residues: MSDLNTLTLAQARDALRKGETTSVALTEACLAAIEGAGALNAFVHKTPELALERAKAADERLQGREEAPKMCGLPIGIKDLFCTKGVPSQAASRILEGFKPEYESTVSQQLADAGAVMLGKLNMDEFAMGSSNETSCYGNAVNPWRRGNDDAALTPGGSSGGSAAAVAADLCLAATGTDTGGSIRQPAAFVGITGIKPTYGRCSRWGIVAFASSLDQAGPMTKDVRDAAIMLEAMCGHDPKDSTSAELAVPDFEAMLTGDIRGKVIGIPREYRMDGMPEEIEALWQQGTEMLRAAGAEIRDISLPHTKYALPTYYVIAPAEASSNLARYDGVRYGHRAKLAQGDGITEMYEKTRAEGFGHEVQRRVMVGTYVLSAGFYDAYYNRARKVRSLIKKDFEDVFAAGVDAILTPATPSAAFGLGEMTDADPVQMYLNDVFTVTVNLAGLPGVSVPAGLDKQGLPLGLQLIGRPWEEGDLLNTAYALEQAAGFVAKPSKWW.

Residues Lys79 and Ser159 each act as charge relay system in the active site. The Acyl-ester intermediate role is filled by Ser183.

This sequence belongs to the amidase family. GatA subfamily. In terms of assembly, heterotrimer of A, B and C subunits.

The enzyme catalyses L-glutamyl-tRNA(Gln) + L-glutamine + ATP + H2O = L-glutaminyl-tRNA(Gln) + L-glutamate + ADP + phosphate + H(+). Allows the formation of correctly charged Gln-tRNA(Gln) through the transamidation of misacylated Glu-tRNA(Gln) in organisms which lack glutaminyl-tRNA synthetase. The reaction takes place in the presence of glutamine and ATP through an activated gamma-phospho-Glu-tRNA(Gln). The protein is Glutamyl-tRNA(Gln) amidotransferase subunit A of Ruegeria pomeroyi (strain ATCC 700808 / DSM 15171 / DSS-3) (Silicibacter pomeroyi).